Here is a 445-residue protein sequence, read N- to C-terminus: Trigger factor (445 aa).

The 86-residue stretch at 162–247 (GDQVTIDAIG…IKAVHTAEPT (86 aa)) folds into the PPIase FKBP-type domain.

The protein belongs to the FKBP-type PPIase family. Tig subfamily.

The protein resides in the cytoplasm. The catalysed reaction is [protein]-peptidylproline (omega=180) = [protein]-peptidylproline (omega=0). Functionally, involved in protein export. Acts as a chaperone by maintaining the newly synthesized protein in an open conformation. Functions as a peptidyl-prolyl cis-trans isomerase. This chain is Trigger factor, found in Rickettsia africae (strain ESF-5).